A 643-amino-acid chain; its full sequence is Conglutin alpha 2 (643 aa).

A signal peptide spans 1-22; that stretch reads MAKPCLFSFSLCLLLLSSLCLA. 2 disulfide bridges follow: Cys31–Cys64 and Cys107–Cys464. The 226-residue stretch at 36–261 folds into the Cupin type-1 1 domain; it reads LNALEPDNRV…AFNVDEEIIN (226 aa). Disordered stretches follow at residues 110–142, 190–243, and 285–458; these read TYEE…DSHQ, PRRF…VLSG, and PKSQ…SRNG. Residues 207 to 218 show a composition bias toward low complexity; it reads QEQQGQQREQQQ. Basic and acidic residues-rich tracts occupy residues 228 to 237 and 298 to 313; these read HQQEQEEEGK and PRQR…RREE. Residues 314–323 are compositionally biased toward acidic residues; it reads EKEEEEEEDE. Composition is skewed to basic and acidic residues over residues 324–333 and 357–369; these read PRSRERYERQ and QEGR…WERT. A compositionally biased stretch (basic residues) spans 422-433; that stretch reads RGRHGGRGRRSG. In terms of domain architecture, Cupin type-1 2 spans 470–616; it reads ENIAKPSRAD…AFGLRLNQVS (147 aa). Positions 623–632 are enriched in polar residues; that stretch reads NQGPLVSPQS. The tract at residues 623 to 643 is disordered; sequence NQGPLVSPQSESEDHTLPKVA. The segment covering 634 to 643 has biased composition (basic and acidic residues); it reads SEDHTLPKVA.

Belongs to the 11S seed storage protein (globulins) family. As to quaternary structure, hexamer; each subunit is composed of an acidic and a basic chain derived from a single precursor and linked by a disulfide bond. Component of globulins complexes which accumulate in seeds.

Its function is as follows. Sulfur-rich seed storage protein. This protein found in the seeds of many leguminous and non-leguminous plants is the source of sulfur-containing amino acids in seed meals. The chain is Conglutin alpha 2 from Lupinus angustifolius (Narrow-leaved blue lupine).